The primary structure comprises 127 residues: Small ribosomal subunit protein uS13 (127 aa).

Residues 96-127 form a disordered region; it reads LPCHGQRTSTNARTRKGPKRTAVKKKGAAKKK. Positions 108–127 are enriched in basic residues; that stretch reads RTRKGPKRTAVKKKGAAKKK.

It belongs to the universal ribosomal protein uS13 family. Part of the 30S ribosomal subunit. Forms a loose heterodimer with protein S19. Forms two bridges to the 50S subunit in the 70S ribosome.

In terms of biological role, located at the top of the head of the 30S subunit, it contacts several helices of the 16S rRNA. In the 70S ribosome it contacts the 23S rRNA (bridge B1a) and protein L5 of the 50S subunit (bridge B1b), connecting the 2 subunits; these bridges are implicated in subunit movement. Contacts the tRNAs in the A and P-sites. This chain is Small ribosomal subunit protein uS13, found in Desulfosudis oleivorans (strain DSM 6200 / JCM 39069 / Hxd3) (Desulfococcus oleovorans).